Here is an 843-residue protein sequence, read N- to C-terminus: Potassium transporter 10 (843 aa).

Residues Met-1 to Pro-15 are compositionally biased toward low complexity. A disordered region spans residues Met-1–Arg-25. The Cytoplasmic segment spans residues Met-1–Met-34. A helical membrane pass occupies residues Ser-35–Val-55. The Vacuolar portion of the chain corresponds to Tyr-56–Glu-72. A helical transmembrane segment spans residues Ile-73–Val-93. Residues Cys-94–Arg-183 are Cytoplasmic-facing. Residues Val-184–Pro-204 traverse the membrane as a helical segment. The Vacuolar portion of the chain corresponds to Ala-205–Lys-225. Residues Tyr-226–Gly-246 traverse the membrane as a helical segment. Residues Thr-247 to Arg-249 are Cytoplasmic-facing. The chain crosses the membrane as a helical span at residues Val-250–Val-270. At Tyr-271–Arg-298 the chain is on the vacuolar side. Residues Gly-299–Ala-319 form a helical membrane-spanning segment. The Cytoplasmic segment spans residues Asp-320–Gln-326. Residues Leu-327–Gly-347 form a helical membrane-spanning segment. Residues Gln-348–Pro-377 lie on the Vacuolar side of the membrane. Residues Val-378 to Phe-398 traverse the membrane as a helical segment. At Ser-399–Gln-425 the chain is on the cytoplasmic side. Residues Ile-426–Phe-446 form a helical membrane-spanning segment. Over Arg-447–His-451 the chain is Vacuolar. A helical membrane pass occupies residues Leu-452–Ser-472. The Cytoplasmic portion of the chain corresponds to Leu-473–Ser-482. A helical transmembrane segment spans residues Ile-483 to Leu-505. The Vacuolar segment spans residues Ile-506–Glu-510. A helical transmembrane segment spans residues Gly-511–Tyr-531. At Gly-532–Val-843 the chain is on the cytoplasmic side. Residues Ala-667–Pro-747 form a disordered region. Over residues Gly-718 to Ala-735 the composition is skewed to gly residues.

This sequence belongs to the HAK/KUP transporter (TC 2.A.72.3) family. Expressed in roots, shoots, and panicle at flowering stage.

Its subcellular location is the vacuole membrane. Its function is as follows. High-affinity potassium transporter. This is Potassium transporter 10 (HAK10) from Oryza sativa subsp. japonica (Rice).